The following is a 330-amino-acid chain: Putative [LysW]-L-2-aminoadipate/[LysW]-L-glutamate phosphate reductase (330 aa).

10–13 is an NADP(+) binding site; sequence SGYI. Cys142 is a catalytic residue. An NADP(+)-binding site is contributed by Asn297.

The protein belongs to the NAGSA dehydrogenase family. Type 1 subfamily. LysY sub-subfamily.

The protein resides in the cytoplasm. The enzyme catalyses [amino-group carrier protein]-C-terminal-N-(1-carboxy-5-oxopentan-1-yl)-L-glutamine + phosphate + NADP(+) = [amino-group carrier protein]-C-terminal-N-(1-carboxy-5-phosphooxy-5-oxopentan-1-yl)-L-glutamine + NADPH + H(+). It carries out the reaction [amino-group carrier protein]-C-terminal-gamma-(L-glutamyl-5-semialdehyde)-L-glutamate + phosphate + NADP(+) = [amino-group carrier protein]-C-terminal-gamma-(5-phospho-L-glutamyl)-L-glutamate + NADPH + H(+). Its pathway is amino-acid biosynthesis; L-lysine biosynthesis via AAA pathway; L-lysine from L-alpha-aminoadipate (Thermus route): step 3/5. It participates in amino-acid biosynthesis; L-arginine biosynthesis. In terms of biological role, involved in both the arginine and lysine biosynthetic pathways. The sequence is that of Putative [LysW]-L-2-aminoadipate/[LysW]-L-glutamate phosphate reductase from Pyrococcus furiosus (strain ATCC 43587 / DSM 3638 / JCM 8422 / Vc1).